Reading from the N-terminus, the 196-residue chain is SPRY domain-containing protein 7 (196 aa).

At A2 the chain carries N-acetylalanine. A B30.2/SPRY domain is found at 2 to 184 (ATSVLCCLRC…FSEFYHTPPP (183 aa)).

In Homo sapiens (Human), this protein is SPRY domain-containing protein 7 (SPRYD7).